We begin with the raw amino-acid sequence, 1293 residues long: Phosphoribosylformylglycinamidine synthase (1293 aa).

ATP-binding positions include Gly305–Asp316 and Ala676. The tract at residues Gly305–Lys327 is disordered. 4 residues coordinate Mg(2+): Asp677, Glu716, Asn720, and Asp884. An ATP-binding site is contributed by Ser886. Residues Met1040–Gly1293 enclose the Glutamine amidotransferase type-1 domain. Cys1133 (nucleophile) is an active-site residue. Catalysis depends on residues His1258 and Glu1260.

In the N-terminal section; belongs to the FGAMS family. Monomer.

The protein localises to the cytoplasm. It carries out the reaction N(2)-formyl-N(1)-(5-phospho-beta-D-ribosyl)glycinamide + L-glutamine + ATP + H2O = 2-formamido-N(1)-(5-O-phospho-beta-D-ribosyl)acetamidine + L-glutamate + ADP + phosphate + H(+). It functions in the pathway purine metabolism; IMP biosynthesis via de novo pathway; 5-amino-1-(5-phospho-D-ribosyl)imidazole from N(2)-formyl-N(1)-(5-phospho-D-ribosyl)glycinamide: step 1/2. In terms of biological role, phosphoribosylformylglycinamidine synthase involved in the purines biosynthetic pathway. Catalyzes the ATP-dependent conversion of formylglycinamide ribonucleotide (FGAR) and glutamine to yield formylglycinamidine ribonucleotide (FGAM) and glutamate. The chain is Phosphoribosylformylglycinamidine synthase from Shewanella sp. (strain MR-4).